The sequence spans 182 residues: MEKFKEIMDANQMRRALVRISHEILEKNKGVENLCLVGIQRRGVTLAKRIQENIEMIEGVKLPLGILDITFYRDDLSLLSEHPTVNSTRIDFDINNKKIVLVDDVIFTGRTVRAAIEALMDMGRPKMIQFAVLIDRGHRELPIRADYVGKNVPTSRKEIVHVLVDEFDNDNRVIIEQLDREI.

The PRPP-binding signature appears at 99–111 (IVLVDDVIFTGRT).

Belongs to the purine/pyrimidine phosphoribosyltransferase family. PyrR subfamily. Homodimer and homohexamer; in equilibrium.

It catalyses the reaction UMP + diphosphate = 5-phospho-alpha-D-ribose 1-diphosphate + uracil. In terms of biological role, regulates transcriptional attenuation of the pyrimidine nucleotide (pyr) operon by binding in a uridine-dependent manner to specific sites on pyr mRNA. This disrupts an antiterminator hairpin in the RNA and favors formation of a downstream transcription terminator, leading to a reduced expression of downstream genes. Functionally, also displays a weak uracil phosphoribosyltransferase activity which is not physiologically significant. The polypeptide is Bifunctional protein PyrR (Caldicellulosiruptor saccharolyticus (strain ATCC 43494 / DSM 8903 / Tp8T 6331)).